Reading from the N-terminus, the 295-residue chain is Probable intramembrane protease C25B8.17 (295 aa).

The helical transmembrane segment at 1–21 threads the bilayer; the sequence is MEGVILASSALFTVYIGAKWS. Topologically, residues 22 to 35 are cytoplasmic; that stretch reads AQEEEPEEKQLINK. A helical transmembrane segment spans residues 36–56; it reads RLAVLFPIFGGVTLVLMYLAL. Residues 57-63 lie on the Lumenal side of the membrane; it reads RYLSKEY. The chain crosses the membrane as a helical span at residues 64 to 84; the sequence is IQLILQGYASLASIICFVRSF. Over 85–89 the chain is Cytoplasmic; it reads NPKTT. A helical transmembrane segment spans residues 90 to 106; it reads FGKITATMSSIAIALFY. Residues 107 to 111 are Lumenal-facing; the sequence is FKTKH. A helical membrane pass occupies residues 112-130; that stretch reads WMASNILAWALAANSISIM. Over 131–139 the chain is Cytoplasmic; sequence RIDSYNTGA. The chain crosses the membrane as a helical span at residues 140-160; that stretch reads LLLGALFFYDIYFVFGTEVMV. Aspartate 149 is an active-site residue. Residues 161–183 are Lumenal-facing; that stretch reads TVATGIDIPAKYVLPQFKNPTRL. A helical transmembrane segment spans residues 184-204; the sequence is SMLGLGDIVMPGLMLALMYRF. The active site involves aspartate 190. Over 205–221 the chain is Cytoplasmic; sequence DLHYYINSTSQPKKHST. A helical membrane pass occupies residues 222 to 244; the sequence is YFRNTFIAYGLGLGVTNFALYYF. The Lumenal portion of the chain corresponds to 245-249; sequence KAAQP. The PAL motif lies at 249-251; that stretch reads PAL. The helical transmembrane segment at 250-268 threads the bilayer; the sequence is ALLYLSPACIVAPLLTAWY. The Cytoplasmic portion of the chain corresponds to 269–295; sequence RDELKTLFSFRSETEDETDEQDKCKST.

It belongs to the peptidase A22B family.

It is found in the endoplasmic reticulum membrane. Its subcellular location is the golgi apparatus membrane. This is Probable intramembrane protease C25B8.17 from Schizosaccharomyces pombe (strain 972 / ATCC 24843) (Fission yeast).